Reading from the N-terminus, the 133-residue chain is Bacteriohemerythrin (133 aa).

His19, His56, Glu60, His75, His79, His115, and Asp120 together coordinate Fe cation.

The protein belongs to the hemerythrin family. As to quaternary structure, monomer.

Its function is as follows. Oxygen-binding protein. May be involved in a storage mechanism or for delivery to oxygen-requiring enzymes. The oxygen-binding site contains two iron atoms. In Campylobacter jejuni subsp. jejuni serotype O:23/36 (strain 81-176), this protein is Bacteriohemerythrin.